The sequence spans 1382 residues: Hepatocyte growth factor receptor (1382 aa).

An N-terminal signal peptide occupies residues 1–24 (MKAPAVLAPGILVLLFTLVQKSYG). The Extracellular portion of the chain corresponds to 25–935 (ECKEALVKSE…VQPDQNFTGL (911 aa)). A Sema domain is found at 27–516 (KEALVKSEMN…TGKKITRIPL (490 aa)). N-linked (GlcNAc...) asparagine glycosylation is present at Asn45. 4 disulfides stabilise this stretch: Cys95-Cys101, Cys98-Cys160, Cys133-Cys141, and Cys173-Cys176. An N-linked (GlcNAc...) asparagine glycan is attached at Asn106. 2 N-linked (GlcNAc...) asparagine glycosylation sites follow: Asn203 and Asn359. Disulfide bonds link Cys299–Cys364 and Cys386–Cys398. Asn400 and Asn406 each carry an N-linked (GlcNAc...) asparagine glycan. Disulfide bonds link Cys521-Cys539, Cys527-Cys562, Cys530-Cys546, and Cys542-Cys552. IPT/TIG domains lie at 564–656 (PAIY…FSYV), 658–740 (PIIT…FSYQ), and 743–837 (PIVY…LIYV). Thr583 carries an O-linked (Man) threonine glycan. 2 N-linked (GlcNAc...) asparagine glycosylation sites follow: Asn608 and Asn636. Thr677 and Thr762 each carry an O-linked (Man) threonine glycan. Residues Asn786, Asn880, and Asn931 are each glycosylated (N-linked (GlcNAc...) asparagine). Residues 936–956 (IAGVISISTIVLLLLGLFLWL) form a helical membrane-spanning segment. The Cytoplasmic portion of the chain corresponds to 957 to 1379 (KRKKQIKDLG…LSSQDNIDGE (423 aa)). Ser967 carries the phosphoserine modification. Thr978 is modified (phosphothreonine). Ser991, Ser998, and Ser1001 each carry phosphoserine. Position 1004 is a phosphotyrosine (Tyr1004). Residues 1079–1346 (VHFNEVIGRG…RISAIFSTFI (268 aa)) form the Protein kinase domain. ATP-binding positions include 1085 to 1093 (IGRGHFGCV) and Lys1111. Residue Asp1205 is the Proton acceptor of the active site. The interval 1213 to 1382 (LDEKFTVKVA…QDNIDGEGDT (170 aa)) is interaction with RANBP9. Phosphotyrosine is present on Tyr1231. Phosphotyrosine; by autocatalysis is present on residues Tyr1235 and Tyr1236. The residue at position 1290 (Thr1290) is a Phosphothreonine. The interval 1321-1360 (WHPRAELRPSFSELVSRISAIFSTFIGEHYVHVNATYVNV) is interaction with MUC20. Phosphotyrosine; by autocatalysis occurs at positions 1350 and 1357. Tyr1366 is modified (phosphotyrosine).

This sequence belongs to the protein kinase superfamily. Tyr protein kinase family. As to quaternary structure, heterodimer made of an alpha chain (50 kDa) and a beta chain (145 kDa) which are disulfide linked. Binds PLXNB1. Interacts when phosphorylated with downstream effectors including STAT3, PIK3R1, SRC, PCLG1, GRB2 and GAB1. Interacts with SPSB1, SPSB2 and SPSB4. Interacts with INPP5D/SHIP1. When phosphorylated at Tyr-1357, interacts with INPPL1/SHIP2. Interacts with RANBP9 and RANBP10, as well as SPSB1, SPSB2, SPSB3 and SPSB4. SPSB1 binding occurs in the presence and in the absence of HGF, however HGF treatment has a positive effect on this interaction. Interacts with MUC20; prevents interaction with GRB2 and suppresses hepatocyte growth factor-induced cell proliferation. Interacts with GRB10. Interacts with PTPN1 and PTPN2. Interacts with HSP90AA1 and HSP90AB1; the interaction suppresses MET kinase activity. Interacts with tensin TNS3. Interacts (when phosphorylated) with tensin TNS4 (via SH2 domain); the interaction increases MET protein stability by inhibiting MET endocytosis and subsequent lysosomal degradation. (Microbial infection) Interacts with L.monocytogenes InlB. InlB probably dimerizes upon binding to MET, which encourages subsequent dimerization of MET. Post-translationally, autophosphorylated in response to ligand binding on Tyr-1235 and Tyr-1236 in the kinase domain leading to further phosphorylation of Tyr-1350 and Tyr-1357 in the C-terminal multifunctional docking site. Dephosphorylated by PTPRJ at Tyr-1350 and Tyr-1366. Dephosphorylated by PTPN1 and PTPN2. Ubiquitinated. Ubiquitination by CBL regulates the receptor stability and activity through proteasomal degradation. In terms of processing, (Microbial infection) Tyrosine phosphorylation is stimulated by L.monocytogenes InlB. Post-translationally, O-mannosylation of IPT/TIG domains by TMEM260 is required for protein maturation. O-mannosylated residues are composed of single mannose glycans that are not elongated or modified.

The protein resides in the membrane. It catalyses the reaction L-tyrosyl-[protein] + ATP = O-phospho-L-tyrosyl-[protein] + ADP + H(+). With respect to regulation, in its inactive state, the C-terminal tail interacts with the catalytic domain and inhibits the kinase activity. Upon ligand binding, the C-terminal tail is displaced and becomes phosphorylated, thus increasing the kinase activity. Functionally, receptor tyrosine kinase that transduces signals from the extracellular matrix into the cytoplasm by binding to hepatocyte growth factor/HGF ligand. Regulates many physiological processes including proliferation, scattering, morphogenesis and survival. Ligand binding at the cell surface induces autophosphorylation of MET on its intracellular domain that provides docking sites for downstream signaling molecules. Following activation by ligand, interacts with the PI3-kinase subunit PIK3R1, PLCG1, SRC, GRB2, STAT3 or the adapter GAB1. Recruitment of these downstream effectors by MET leads to the activation of several signaling cascades including the RAS-ERK, PI3 kinase-AKT, or PLCgamma-PKC. The RAS-ERK activation is associated with the morphogenetic effects while PI3K/AKT coordinates prosurvival effects. During embryonic development, MET signaling plays a role in gastrulation, development and migration of muscles and neuronal precursors, angiogenesis and kidney formation. In adults, participates in wound healing as well as organ regeneration and tissue remodeling. Also promotes differentiation and proliferation of hematopoietic cells. (Microbial infection) Acts as a receptor for Listeria monocytogenes internalin InlB, mediating entry of the pathogen into cells. This Canis lupus familiaris (Dog) protein is Hepatocyte growth factor receptor (MET).